We begin with the raw amino-acid sequence, 269 residues long: Lysyl endopeptidase (269 aa).

Intrachain disulfides connect C6–C216, C12–C80, and C36–C58. Active-site charge relay system residues include H57, D113, and S194.

The protein belongs to the peptidase S1 family.

The protein resides in the secreted. The enzyme catalyses Preferential cleavage: Lys-|-Xaa, including Lys-|-Pro.. Highly specific endopeptidase that hydrolyzes lysyl bonds including the Lys-Pro bond. This Lysobacter enzymogenes protein is Lysyl endopeptidase.